A 1385-amino-acid chain; its full sequence is Defecation cycle abnormal dec-7 (1385 aa).

A signal peptide spans 1–19; the sequence is MWTARHAVALLVVLTYAYS. Residue Asn-156 is glycosylated (N-linked (GlcNAc...) asparagine). Positions 234–262 are disordered; sequence SQTNYGAPNYQQAGAQSAANQQFSNPSQY. Over residues 242 to 261 the composition is skewed to low complexity; sequence NYQQAGAQSAANQQFSNPSQ. The region spanning 285-450 is the NIDO domain; sequence QIYGKRKKRQ…GRWIHRVDEV (166 aa). 7 N-linked (GlcNAc...) asparagine glycosylation sites follow: Asn-313, Asn-386, Asn-413, Asn-458, Asn-480, Asn-562, and Asn-583. The AMOP domain maps to 681-840; that stretch reads GRNWPIDMCI…DHCEFYYWRR (160 aa). One can recognise a VWFD domain in the interval 852-1088; it reads AAGYIYGEPH…FWKIDGTNDK (237 aa). N-linked (GlcNAc...) asparagine glycans are attached at residues Asn-909, Asn-921, Asn-975, Asn-1009, and Asn-1124. In terms of domain architecture, Sushi spans 1179–1238; that stretch reads ISCGPLLKKEGVVKTPPAANYLDGDKVVFSCKPKYYIHGDIERVCRNGTWSPGWWAWCRD. Intrachain disulfides connect Cys-1181/Cys-1223 and Cys-1209/Cys-1236. An N-linked (GlcNAc...) asparagine glycan is attached at Asn-1225. A helical transmembrane segment spans residues 1251-1271; sequence LLSIFGISLIFVIFFCILWNI. Residues 1321-1385 are disordered; it reads MNQPSRPIPS…GNMRFETSAI (65 aa).

Highly expressed in the intestinal epithelia.

The protein resides in the membrane. It localises to the cell junction. In terms of biological role, may negatively regulate activity of innexin gap junction protein inx-16, thereby mediating the rhythmic frequency of the defecation motor program. Required for the clustering of inx-16 to the cell-cell junction of the intestinal epithelia. Probably dispensable for intestinal integrity. May be a cytokine receptor. The polypeptide is Defecation cycle abnormal dec-7 (Caenorhabditis elegans).